The sequence spans 331 residues: MASLKNKHFMIGLSLTFIVALFSFLAAKLPILDKVGALTIAILIAILYRHFKGYPEQYSSGITFSSKYLLRFAIILYGLKLNIFDIIGQGSRLLAIDVGVVIFSIVMMLFVNKLLRGDKNIALLLGVGTGVCGAAAIAAVAPIFKSREKDTAISIGIIALIGTIFSLIYTAIYAIFSMTTNVYGAWSGVSLHEIAHVVLAGGFGGSDALKIALLGKLGRVFLLIPLTIVLILIMRFRSSESSSKGRISIPYFLIGFVIMALVNTYVTIPSVLLNILNTVSTICLLMAMVALGLNVAFKDLKNRALKPLMTIIITSICLSSLAFIVVHWLYS.

11 helical membrane-spanning segments follow: residues 9–26, 31–48, 69–88, 93–115, 122–144, 154–176, 183–202, 217–234, 247–269, 273–295, and 308–330; these read FMIGLSLTFIVALFSFLA, ILDKVGALTIAILIAILY, LLRFAIILYGLKLNIFDIIG, LLAIDVGVVIFSIVMMLFVNKLL, ALLLGVGTGVCGAAAIAAVAPIF, SIGIIALIGTIFSLIYTAIYAIF, YGAWSGVSLHEIAHVVLAGG, LGRVFLLIPLTIVLILIM, ISIPYFLIGFVIMALVNTYVTIP, LNILNTVSTICLLMAMVALGLNV, and LMTIIITSICLSSLAFIVVHWLY.

Belongs to the UPF0324 family.

The protein resides in the cell membrane. The protein is UPF0324 membrane protein SAR0338 of Staphylococcus aureus (strain MRSA252).